The following is a 442-amino-acid chain: Protein trichome birefringence-like 26 (442 aa).

The chain crosses the membrane as a helical; Signal-anchor for type II membrane protein span at residues 51 to 71 (FFLYFSLVALAYYFIISSLAV). A GDS motif motif is present at residues 164–166 (GDS). A DCXHWCLPGXXDXWN motif motif is present at residues 409 to 423 (DCLHWCLPGPIDSWN).

The protein belongs to the PC-esterase family. TBL subfamily.

The protein localises to the membrane. In terms of biological role, may be involved in the O-acetylation of mannan. May act as a bridging protein that binds pectin and other cell wall polysaccharides. Probably involved in maintaining esterification of pectins. In Arabidopsis thaliana (Mouse-ear cress), this protein is Protein trichome birefringence-like 26 (TBL26).